A 506-amino-acid polypeptide reads, in one-letter code: Cytochrome P450 monooxygenase TES1 (506 aa).

Residues 26-46 (MSVVLAGLILLASIYFPRFMF) traverse the membrane as a helical segment. N-linked (GlcNAc...) asparagine glycosylation is found at Asn-167, Asn-201, Asn-298, and Asn-427. Residue Cys-440 coordinates heme.

This sequence belongs to the cytochrome P450 family. The cofactor is heme.

It localises to the membrane. Its pathway is phytotoxin biosynthesis. In terms of biological role, cytochrome P450 monooxygenase; part of the gene cluster that mediates the biosynthesis of the phytotoxin tentoxin, an inhibitor the F1-ATPase activity of chloroplasts, resulting in chlorosis in sensitive plants. Tentoxin is a cyclic tetrapeptide that consists of four amino acid residues: glycine (Gly), alanine (Ala), leucine (Leu), and dehydrophenylalanine (DPhe). In addition, both the Ala and DPhe residues are N-methylated. The nonribosomal peptide synthetase TES assembles tentoxin from the four substrate amino acids. The adenylation domains of each of the 4 modules are responsible for the activation of Gly, Ala, Leu and DPhe, respectively. In addition, the N-methyltransferase domains in the second and fourth modules of TES could be responsible for N-methylation of Ala and DPhe residues. Finally, the condensation domain located in the termination module probably catalyzes the formation of the intramolecular macrocyclization and then the release of tentoxin. The cytochrome P450 monooxygenase TES1 is predicted to be involved in the formation of DPhe. The polypeptide is Cytochrome P450 monooxygenase TES1 (Alternaria alternata (Alternaria rot fungus)).